A 353-amino-acid chain; its full sequence is Photosystem II protein D1 (353 aa).

Residue threonine 2 is modified to N-acetylthreonine. The residue at position 2 (threonine 2) is a Phosphothreonine. Transmembrane regions (helical) follow at residues 29–46, 118–133, and 142–156; these read YIGW…TATS, HFLL…EWEL, and WIAV…AATA. Residue histidine 118 participates in chlorophyll a binding. Tyrosine 126 serves as a coordination point for pheophytin a. Aspartate 170 and glutamate 189 together coordinate [CaMn4O5] cluster. Residues 197-218 traverse the membrane as a helical segment; it reads FHMLGVAGVFGGSLFSAMHGSL. Histidine 198 contributes to the chlorophyll a binding site. A quinone is bound by residues histidine 215 and 264 to 265; that span reads SF. Fe cation is bound at residue histidine 215. Histidine 272 is a binding site for Fe cation. Residues 274-288 form a helical membrane-spanning segment; sequence FLAAWPVVGIWFTAL. [CaMn4O5] cluster is bound by residues histidine 332, glutamate 333, aspartate 342, and alanine 344. A propeptide spanning residues 345-353 is cleaved from the precursor; the sequence is AVEAPSING.

Belongs to the reaction center PufL/M/PsbA/D family. As to quaternary structure, PSII is composed of 1 copy each of membrane proteins PsbA, PsbB, PsbC, PsbD, PsbE, PsbF, PsbH, PsbI, PsbJ, PsbK, PsbL, PsbM, PsbT, PsbX, PsbY, PsbZ, Psb30/Ycf12, at least 3 peripheral proteins of the oxygen-evolving complex and a large number of cofactors. It forms dimeric complexes. It depends on The D1/D2 heterodimer binds P680, chlorophylls that are the primary electron donor of PSII, and subsequent electron acceptors. It shares a non-heme iron and each subunit binds pheophytin, quinone, additional chlorophylls, carotenoids and lipids. D1 provides most of the ligands for the Mn4-Ca-O5 cluster of the oxygen-evolving complex (OEC). There is also a Cl(-1) ion associated with D1 and D2, which is required for oxygen evolution. The PSII complex binds additional chlorophylls, carotenoids and specific lipids. as a cofactor. Post-translationally, tyr-161 forms a radical intermediate that is referred to as redox-active TyrZ, YZ or Y-Z. In terms of processing, C-terminally processed by CTPA; processing is essential to allow assembly of the oxygen-evolving complex and thus photosynthetic growth.

Its subcellular location is the plastid. The protein localises to the chloroplast thylakoid membrane. It carries out the reaction 2 a plastoquinone + 4 hnu + 2 H2O = 2 a plastoquinol + O2. Functionally, this is one of the two reaction center proteins of photosystem II. Its function is as follows. Photosystem II (PSII) is a light-driven water:plastoquinone oxidoreductase that uses light energy to abstract electrons from H(2)O, generating O(2) and a proton gradient subsequently used for ATP formation. It consists of a core antenna complex that captures photons, and an electron transfer chain that converts photonic excitation into a charge separation. The D1/D2 (PsbA/PsbD) reaction center heterodimer binds P680, the primary electron donor of PSII as well as several subsequent electron acceptors. This Pisum sativum (Garden pea) protein is Photosystem II protein D1.